We begin with the raw amino-acid sequence, 285 residues long: uncharacterized protein (285 aa).

Belongs to the methyltransferase superfamily.

This is an uncharacterized protein from Mycobacterium tuberculosis (strain CDC 1551 / Oshkosh).